A 548-amino-acid polypeptide reads, in one-letter code: DNA ligase (548 aa).

E196 lines the ATP pocket. The active-site N6-AMP-lysine intermediate is K198. The ATP site is built by R203, R218, E250, and F284. E250 contributes to the a divalent metal cation binding site. A divalent metal cation is bound at residue E345. Positions 361 and 365 each coordinate ATP. Residues 515 to 548 are disordered; that stretch reads EQLIRNSQENTKKTFARLATTYDGPSPNKKLKLN.

Belongs to the ATP-dependent DNA ligase family. The cofactor is a divalent metal cation.

It carries out the reaction ATP + (deoxyribonucleotide)n-3'-hydroxyl + 5'-phospho-(deoxyribonucleotide)m = (deoxyribonucleotide)n+m + AMP + diphosphate.. Its function is as follows. Able to ligate a double-stranded synthetic DNA substrate containing a single nick and inefficiently ligated a 1 nucleotide gap but did not ligate a 2 nucleotide gap. It is able to ligate short, complementary overhangs but not blunt-ended double-stranded DNA. May be implicated in DNA repair and recombination. This Lepidoptera (butterflies and moths) protein is DNA ligase (LIG).